The following is a 407-amino-acid chain: Imidazolonepropionase (407 aa).

His74 and His76 together coordinate Fe(3+). Residues His74 and His76 each contribute to the Zn(2+) site. 4-imidazolone-5-propanoate contacts are provided by Arg83, Tyr146, and His179. An N-formimidoyl-L-glutamate-binding site is contributed by Tyr146. His244 contributes to the Fe(3+) binding site. His244 contributes to the Zn(2+) binding site. Gln247 provides a ligand contact to 4-imidazolone-5-propanoate. Asp319 provides a ligand contact to Fe(3+). Residue Asp319 participates in Zn(2+) binding. N-formimidoyl-L-glutamate contacts are provided by Asn321 and Gly323. Position 324 (Thr324) interacts with 4-imidazolone-5-propanoate.

The protein belongs to the metallo-dependent hydrolases superfamily. HutI family. Zn(2+) is required as a cofactor. Fe(3+) serves as cofactor.

Its subcellular location is the cytoplasm. It catalyses the reaction 4-imidazolone-5-propanoate + H2O = N-formimidoyl-L-glutamate. The protein operates within amino-acid degradation; L-histidine degradation into L-glutamate; N-formimidoyl-L-glutamate from L-histidine: step 3/3. Catalyzes the hydrolytic cleavage of the carbon-nitrogen bond in imidazolone-5-propanoate to yield N-formimidoyl-L-glutamate. It is the third step in the universal histidine degradation pathway. The sequence is that of Imidazolonepropionase from Salmonella paratyphi C (strain RKS4594).